Here is a 599-residue protein sequence, read N- to C-terminus: Elongation factor 4 (599 aa).

A tr-type G domain is found at 2–184 (KNIRNFSIIA…RLVRDIPPPE (183 aa)). GTP-binding positions include 14–19 (DHGKST) and 131–134 (NKID).

The protein belongs to the TRAFAC class translation factor GTPase superfamily. Classic translation factor GTPase family. LepA subfamily.

Its subcellular location is the cell inner membrane. The catalysed reaction is GTP + H2O = GDP + phosphate + H(+). Functionally, required for accurate and efficient protein synthesis under certain stress conditions. May act as a fidelity factor of the translation reaction, by catalyzing a one-codon backward translocation of tRNAs on improperly translocated ribosomes. Back-translocation proceeds from a post-translocation (POST) complex to a pre-translocation (PRE) complex, thus giving elongation factor G a second chance to translocate the tRNAs correctly. Binds to ribosomes in a GTP-dependent manner. This Klebsiella pneumoniae (strain 342) protein is Elongation factor 4.